A 322-amino-acid chain; its full sequence is Acetyl-coenzyme A carboxylase carboxyl transferase subunit alpha (322 aa).

In terms of domain architecture, CoA carboxyltransferase C-terminal spans 40 to 297; that stretch reads PLQKKLGDLR…RETLTRNLEE (258 aa).

It belongs to the AccA family. In terms of assembly, acetyl-CoA carboxylase is a heterohexamer composed of biotin carboxyl carrier protein (AccB), biotin carboxylase (AccC) and two subunits each of ACCase subunit alpha (AccA) and ACCase subunit beta (AccD).

Its subcellular location is the cytoplasm. The catalysed reaction is N(6)-carboxybiotinyl-L-lysyl-[protein] + acetyl-CoA = N(6)-biotinyl-L-lysyl-[protein] + malonyl-CoA. It functions in the pathway lipid metabolism; malonyl-CoA biosynthesis; malonyl-CoA from acetyl-CoA: step 1/1. Functionally, component of the acetyl coenzyme A carboxylase (ACC) complex. First, biotin carboxylase catalyzes the carboxylation of biotin on its carrier protein (BCCP) and then the CO(2) group is transferred by the carboxyltransferase to acetyl-CoA to form malonyl-CoA. The polypeptide is Acetyl-coenzyme A carboxylase carboxyl transferase subunit alpha (Gemmatimonas aurantiaca (strain DSM 14586 / JCM 11422 / NBRC 100505 / T-27)).